The following is a 33-amino-acid chain: Putative tumor antigen NA88-A (33 aa).

As to expression, expressed in testis and melanoma cell lines.

This Homo sapiens (Human) protein is Putative tumor antigen NA88-A (VENTXP1).